Reading from the N-terminus, the 474-residue chain is Trigger factor (474 aa).

Positions 165-250 constitute a PPIase FKBP-type domain; it reads GDRVTIDYLG…VKTVSKPDEL (86 aa). Residues 451-467 show a composition bias toward basic and acidic residues; the sequence is VKKKTASDNKKSNEIKK. The tract at residues 451–474 is disordered; the sequence is VKKKTASDNKKSNEIKKKSTMKKV.

The protein belongs to the FKBP-type PPIase family. Tig subfamily.

Its subcellular location is the cytoplasm. It carries out the reaction [protein]-peptidylproline (omega=180) = [protein]-peptidylproline (omega=0). In terms of biological role, involved in protein export. Acts as a chaperone by maintaining the newly synthesized protein in an open conformation. Functions as a peptidyl-prolyl cis-trans isomerase. This chain is Trigger factor, found in Bartonella bacilliformis (strain ATCC 35685 / KC583 / Herrer 020/F12,63).